Reading from the N-terminus, the 211-residue chain is N-(5'-phosphoribosyl)anthranilate isomerase (211 aa).

This sequence belongs to the TrpF family.

The catalysed reaction is N-(5-phospho-beta-D-ribosyl)anthranilate = 1-(2-carboxyphenylamino)-1-deoxy-D-ribulose 5-phosphate. The protein operates within amino-acid biosynthesis; L-tryptophan biosynthesis; L-tryptophan from chorismate: step 3/5. The sequence is that of N-(5'-phosphoribosyl)anthranilate isomerase from Zymomonas mobilis subsp. mobilis (strain ATCC 31821 / ZM4 / CP4).